A 308-amino-acid polypeptide reads, in one-letter code: ADP,ATP carrier protein (308 aa).

Solcar repeat units follow at residues 6–99 (KNFM…FKRM), 110–203 (KWFA…LKPV), and 211–297 (NNFL…LQVI). 5 helical membrane passes run 8 to 35 (FMVDFLAGGLSAAVSKTAAAPIERVKLL), 76 to 100 (TANVIRYFPTQALNFAFKDKFKRMF), 108 to 128 (YWKWFAGNMASGGAAGAVSLS), 179 to 200 (FNISCVGIVVYRGLYFGMYDSL), and 214 to 234 (LAAFLLGWGITIGAGLASYPI). Residues R81 and K93 each coordinate ADP. ADP is bound at residue R238. The segment at 238–243 (RRRMMM) is important for transport activity. The Nucleotide carrier signature motif motif lies at 238–243 (RRRMMM). The chain crosses the membrane as a helical span at residues 274–294 (AGANILRAVAGAGVLAGYDQL).

Belongs to the mitochondrial carrier (TC 2.A.29) family. Monomer.

The protein resides in the mitochondrion inner membrane. The enzyme catalyses ADP(in) + ATP(out) = ADP(out) + ATP(in). Its activity is regulated as follows. The matrix-open state (m-state) is inhibited by the membrane-permeable bongkrekic acid (BKA). The cytoplasmic-open state (c-state) is inhibited by the membrane-impermeable toxic inhibitor carboxyatractyloside (CATR). ADP:ATP antiporter that mediates import of ADP into the mitochondrial matrix for ATP synthesis, and export of ATP out to fuel the cell. Cycles between the cytoplasmic-open state (c-state) and the matrix-open state (m-state): operates by the alternating access mechanism with a single substrate-binding site intermittently exposed to either the cytosolic (c-state) or matrix (m-state) side of the inner mitochondrial membrane. This chain is ADP,ATP carrier protein (ABT), found in Chlamydomonas reinhardtii (Chlamydomonas smithii).